Consider the following 99-residue polypeptide: DASH complex subunit DAD1 (99 aa).

The tract at residues 69-99 (GMNHQTRENTRDENNKISSSDTEDENNNNKI) is disordered. Positions 73-83 (QTRENTRDENN) are enriched in basic and acidic residues. A compositionally biased stretch (acidic residues) spans 89 to 99 (DTEDENNNNKI).

The protein belongs to the DASH complex DAD1 family. In terms of assembly, component of the DASH complex consisting of ASK1, DAD1, DAD2, DAD3, DAD4, DAM1, DUO1, HSK3, SPC19 and SPC34, with a stoichiometry of one copy of each subunit per complex. Multiple DASH complexes oligomerize to form a ring that encircles spindle microtubules and organizes the rod-like NDC80 complexes of the outer kinetochore. DASH complex oligomerization strengthens microtubule attachments. On cytoplasmic microtubules, DASH complexes appear to form patches instead of rings.

The protein localises to the chromosome. It localises to the centromere. The protein resides in the kinetochore. Its subcellular location is the cytoplasm. It is found in the cytoskeleton. The protein localises to the spindle. It localises to the nucleus. Functionally, component of the DASH complex that connects microtubules with kinetochores and couples microtubule depolymerisation to chromosome movement; it is involved in retrieving kinetochores to the spindle poles before their re-orientation on the spindle in early mitosis and allows microtubule depolymerization to pull chromosomes apart and resist detachment during anaphase. Kinetochores, consisting of a centromere-associated inner segment and a microtubule-contacting outer segment, play a crucial role in chromosome segregation by mediating the physical connection between centromeric DNA and microtubules. Kinetochores also serve as an input point for the spindle assembly checkpoint, which delays anaphase until all chromosomes have bioriented on the mitotic spindle. The protein is DASH complex subunit DAD1 of Candida albicans (strain SC5314 / ATCC MYA-2876) (Yeast).